The following is a 176-amino-acid chain: NAD(P)H-quinone oxidoreductase subunit 6, chloroplastic (176 aa).

5 helical membrane passes run 10–30, 32–52, 61–81, 107–127, and 152–172; these read ILLV…VLLT, PIYS…FHIP, AQLL…VMFM, ILFS…IWTT, and FYLP…GAIA.

This sequence belongs to the complex I subunit 6 family. NDH is composed of at least 16 different subunits, 5 of which are encoded in the nucleus.

It is found in the plastid. The protein resides in the chloroplast thylakoid membrane. The catalysed reaction is a plastoquinone + NADH + (n+1) H(+)(in) = a plastoquinol + NAD(+) + n H(+)(out). It catalyses the reaction a plastoquinone + NADPH + (n+1) H(+)(in) = a plastoquinol + NADP(+) + n H(+)(out). Functionally, NDH shuttles electrons from NAD(P)H:plastoquinone, via FMN and iron-sulfur (Fe-S) centers, to quinones in the photosynthetic chain and possibly in a chloroplast respiratory chain. The immediate electron acceptor for the enzyme in this species is believed to be plastoquinone. Couples the redox reaction to proton translocation, and thus conserves the redox energy in a proton gradient. The sequence is that of NAD(P)H-quinone oxidoreductase subunit 6, chloroplastic (ndhG) from Calycanthus floridus var. glaucus (Eastern sweetshrub).